The sequence spans 292 residues: NAD kinase (292 aa).

Asp-73 functions as the Proton acceptor in the catalytic mechanism. Residues 73-74 (DG), 147-148 (NE), His-158, Arg-175, Asp-177, 188-193 (TGYSLS), and Gln-247 contribute to the NAD(+) site.

It belongs to the NAD kinase family. A divalent metal cation is required as a cofactor.

Its subcellular location is the cytoplasm. It carries out the reaction NAD(+) + ATP = ADP + NADP(+) + H(+). In terms of biological role, involved in the regulation of the intracellular balance of NAD and NADP, and is a key enzyme in the biosynthesis of NADP. Catalyzes specifically the phosphorylation on 2'-hydroxyl of the adenosine moiety of NAD to yield NADP. In Buchnera aphidicola subsp. Schizaphis graminum (strain Sg), this protein is NAD kinase.